A 184-amino-acid polypeptide reads, in one-letter code: MMAMNTETLSLIKQSIKTIPNYPKEGILFRDVTSLLENAAAYKAAIDLLVEHYRGQGFTKIVGTEARGFLFGAPLALELGIGFVPVRKPGKLPRATISQSYELEYGHDSLEIHTDAISANDKVLVVDDLLATGGTIEATVKLIRQLGGEVKDAAFVISLPDLGGEARLTALGLELVKLCEFEGE.

This sequence belongs to the purine/pyrimidine phosphoribosyltransferase family. Homodimer.

It localises to the cytoplasm. The enzyme catalyses AMP + diphosphate = 5-phospho-alpha-D-ribose 1-diphosphate + adenine. Its pathway is purine metabolism; AMP biosynthesis via salvage pathway; AMP from adenine: step 1/1. In terms of biological role, catalyzes a salvage reaction resulting in the formation of AMP, that is energically less costly than de novo synthesis. The protein is Adenine phosphoribosyltransferase of Shewanella putrefaciens (strain CN-32 / ATCC BAA-453).